Here is a 592-residue protein sequence, read N- to C-terminus: MVSLQVSPLSQTLILAFLLPQALPAGVFELQIHSFGPGPGLGTPRSPCNARGPCRLFFRVCLKPGVSQEATESLCALGAALSTSVPVYTEHPGESAAALPLPDGLVRVPFRDAWPGTFSLVIETWREQLGEHAGGPAWNLLARVVGRRRLAAGGPWARDVQRTGTWELHFSYRARCEPPAVGAACARLCRSRSAPSRCGPGLRPCTPFPDECEAPSVCRPGCSPEHGYCEEPDECRCLEGWTGPLCTVPVSTSSCLNSRVPGPASTGCLLPGPGPCDGNPCANGGSCSETSGSFECACPRGFYGLRCEVSGVTCADGPCFNGGLCVGGEDPDSAYVCHCPPGFQGSNCEKRVDRCSLQPCQNGGLCLDLGHALRCRCRAGFAGPRCEHDLDDCAGRACANGGTCVEGGGSRRCSCALGFGGRDCRERADPCASRPCAHGGRCYAHFSGLVCACAPGYMGVRCEFAVRPDGADAVPAAPRGLRQADPQRFLLPPALGLLVAAGLAGAALLVIHVRRRGPGQDTGTRLLSGTREPSVHTLPDALNNLRLQDGAGDGPSSSADWNHPEDGDSRSIYVIPAPSIYAREDWLIQVLF.

The first 32 residues, 1–32 (MVSLQVSPLSQTLILAFLLPQALPAGVFELQI), serve as a signal peptide directing secretion. Topologically, residues 33-490 (HSFGPGPGLG…LRQADPQRFL (458 aa)) are extracellular. The DSL domain occupies 174–213 (ARCEPPAVGAACARLCRSRSAPSRCGPGLRPCTPFPDECE). EGF-like domains follow at residues 214–247 (APSV…PLCT), 272–308 (GPGP…LRCE), 310–349 (SGVT…SNCE), 351–387 (RVDR…PRCE), 389–425 (DLDD…RDCR), and 427–463 (RADP…VRCE). 18 disulfide bridges follow: C218/C229, C222/C235, C237/C246, C276/C287, C281/C296, C298/C307, C314/C325, C319/C337, C339/C348, C355/C366, C360/C375, C377/C386, C393/C404, C398/C413, C415/C424, C431/C442, C436/C451, and C453/C462. A helical membrane pass occupies residues 491–511 (LPPALGLLVAAGLAGAALLVI). At 512–592 (HVRRRGPGQD…REDWLIQVLF (81 aa)) the chain is on the cytoplasmic side. Positions 548 to 567 (QDGAGDGPSSSADWNHPEDG) are disordered.

Can bind and activate Notch-1 or another Notch receptor. Post-translationally, ubiquitinated by MIB (MIB1 or MIB2), leading to its endocytosis and subsequent degradation. In terms of tissue distribution, predominantly expressed in the neuroectoderm and paraxial mesoderm during embryogenesis.

The protein resides in the membrane. Inhibits primary neurogenesis. May be required to divert neurons along a specific differentiation pathway. Plays a role in the formation of somite boundaries during segmentation of the paraxial mesoderm. The protein is Delta-like protein 3 (Dll3) of Mus musculus (Mouse).